A 235-amino-acid chain; its full sequence is Class A basic helix-loop-helix protein 9 (235 aa).

Disordered regions lie at residues 1–69 and 132–235; these read MLRG…RRMA and GHLE…HPRS. The span at 55-67 shows a compositional bias: basic residues; sequence RRRARPVRSKARR. Positions 65–117 constitute a bHLH domain; it reads ARRMAANVRERKRILDYNEAFNALRRALRHDLGGKRLSKIATLRRAIHRIAAL.

Heterodimer. Efficient DNA binding requires dimerization with another bHLH protein. Interacts with TCF3, TCF4, and TCF12.

Its subcellular location is the nucleus. The protein localises to the cytoplasm. Its function is as follows. Transcription factor, which play a role in limb development. Is an essential player in the regulatory network governing transcription of genes implicated in limb morphogenesis. This Homo sapiens (Human) protein is Class A basic helix-loop-helix protein 9 (BHLHA9).